We begin with the raw amino-acid sequence, 225 residues long: Small ribosomal subunit protein uS7 (225 aa).

This sequence belongs to the universal ribosomal protein uS7 family. As to quaternary structure, component of the small ribosomal subunit. Mature ribosomes consist of a small (40S) and a large (60S) subunit. The 40S subunit contains about 32 different proteins and 1 molecule of RNA (18S). The 60S subunit contains 45 different proteins and 3 molecules of RNA (25S, 5.8S and 5S).

The protein resides in the cytoplasm. In terms of biological role, component of the ribosome, a large ribonucleoprotein complex responsible for the synthesis of proteins in the cell. The small ribosomal subunit (SSU) binds messenger RNAs (mRNAs) and translates the encoded message by selecting cognate aminoacyl-transfer RNA (tRNA) molecules. The large subunit (LSU) contains the ribosomal catalytic site termed the peptidyl transferase center (PTC), which catalyzes the formation of peptide bonds, thereby polymerizing the amino acids delivered by tRNAs into a polypeptide chain. The nascent polypeptides leave the ribosome through a tunnel in the LSU and interact with protein factors that function in enzymatic processing, targeting, and the membrane insertion of nascent chains at the exit of the ribosomal tunnel. This is Small ribosomal subunit protein uS7 (RPS5) from Candida albicans (strain SC5314 / ATCC MYA-2876) (Yeast).